We begin with the raw amino-acid sequence, 562 residues long: Serine/threonine-protein kinase dst3 (562 aa).

Residues 23–285 (FQIVEVVGSG…AQQLLSHPFI (263 aa)) form the Protein kinase domain. ATP is bound by residues 29 to 37 (VGSGSFGTV) and lysine 59. Aspartate 154 acts as the Proton acceptor in catalysis. Disordered stretches follow at residues 316-339 (LEEQ…TRAS) and 366-562 (SIMR…NVNI). A compositionally biased stretch (polar residues) spans 322-339 (QRNSSGSKMVSSVPTRAS). Low complexity-rich tracts occupy residues 421–431 (NNNNNNNNTTT), 442–454 (QQQQ…NNNK), and 476–494 (TTPT…TTKT). Residues 495-522 (GSSLNIKPTNNVNRSTISIGQQKSPLQS) are compositionally biased toward polar residues. Positions 542 to 562 (EDEEDEEEFNHEDYEEINVNI) are enriched in acidic residues.

It belongs to the protein kinase superfamily. STE Ser/Thr protein kinase family. STE20 subfamily. The cofactor is Mg(2+).

The enzyme catalyses L-seryl-[protein] + ATP = O-phospho-L-seryl-[protein] + ADP + H(+). It carries out the reaction L-threonyl-[protein] + ATP = O-phospho-L-threonyl-[protein] + ADP + H(+). This is Serine/threonine-protein kinase dst3 from Dictyostelium discoideum (Social amoeba).